We begin with the raw amino-acid sequence, 197 residues long: Beta-crystallin A2 (197 aa).

Residues 1 to 11 form an N-terminal arm region; it reads MSSAPAQGPAP. 2 consecutive Beta/gamma crystallin 'Greek key' domains span residues 12-52 and 53-99; these read ASLT…KVEN and GAWV…RPVL. Residues 100 to 105 form a connecting peptide region; the sequence is CANHSD. Beta/gamma crystallin 'Greek key' domains lie at 106 to 147 and 148 to 196; these read SRVT…KVSS and GAWV…RRVQ.

It belongs to the beta/gamma-crystallin family. As to quaternary structure, homo/heterodimer, or complexes of higher-order. The structure of beta-crystallin oligomers seems to be stabilized through interactions between the N-terminal arms.

In terms of biological role, crystallins are the dominant structural components of the vertebrate eye lens. This Bos taurus (Bovine) protein is Beta-crystallin A2 (CRYBA2).